The chain runs to 143 residues: Transcriptional regulator MraZ (143 aa).

SpoVT-AbrB domains are found at residues 5 to 47 and 76 to 119; these read EYNH…SMDE and ATEC…SSDQ.

This sequence belongs to the MraZ family. As to quaternary structure, forms oligomers.

It is found in the cytoplasm. It localises to the nucleoid. This is Transcriptional regulator MraZ from Alkaliphilus metalliredigens (strain QYMF).